We begin with the raw amino-acid sequence, 298 residues long: 4-diphosphocytidyl-2-C-methyl-D-erythritol kinase (298 aa).

Lysine 19 is an active-site residue. 106 to 116 serves as a coordination point for ATP; it reads PVASGIGGGSA. The active site involves aspartate 148.

Belongs to the GHMP kinase family. IspE subfamily.

The catalysed reaction is 4-CDP-2-C-methyl-D-erythritol + ATP = 4-CDP-2-C-methyl-D-erythritol 2-phosphate + ADP + H(+). It participates in isoprenoid biosynthesis; isopentenyl diphosphate biosynthesis via DXP pathway; isopentenyl diphosphate from 1-deoxy-D-xylulose 5-phosphate: step 3/6. Its function is as follows. Catalyzes the phosphorylation of the position 2 hydroxy group of 4-diphosphocytidyl-2C-methyl-D-erythritol. The sequence is that of 4-diphosphocytidyl-2-C-methyl-D-erythritol kinase from Rhizobium leguminosarum bv. trifolii (strain WSM2304).